Consider the following 141-residue polypeptide: Large ribosomal subunit protein uL16 (141 aa).

Residues 1 to 19 (MLMPKKTKYRKQQKGRNRG) are compositionally biased toward basic residues. The interval 1 to 22 (MLMPKKTKYRKQQKGRNRGKAY) is disordered.

Belongs to the universal ribosomal protein uL16 family. As to quaternary structure, part of the 50S ribosomal subunit.

Binds 23S rRNA and is also seen to make contacts with the A and possibly P site tRNAs. The chain is Large ribosomal subunit protein uL16 from Nitratiruptor sp. (strain SB155-2).